Reading from the N-terminus, the 193-residue chain is dTTP/UTP pyrophosphatase (193 aa).

The active-site Proton acceptor is the Asp-68.

It belongs to the Maf family. YhdE subfamily. A divalent metal cation is required as a cofactor.

It localises to the cytoplasm. The catalysed reaction is dTTP + H2O = dTMP + diphosphate + H(+). It carries out the reaction UTP + H2O = UMP + diphosphate + H(+). Its function is as follows. Nucleoside triphosphate pyrophosphatase that hydrolyzes dTTP and UTP. May have a dual role in cell division arrest and in preventing the incorporation of modified nucleotides into cellular nucleic acids. The protein is dTTP/UTP pyrophosphatase of Ruegeria sp. (strain TM1040) (Silicibacter sp.).